We begin with the raw amino-acid sequence, 272 residues long: 3-methyl-2-oxobutanoate hydroxymethyltransferase (272 aa).

Positions 51 and 90 each coordinate Mg(2+). Residues Asp51–Ser52, Asp90, and Lys118 contribute to the 3-methyl-2-oxobutanoate site. Mg(2+) is bound at residue Glu120. The active-site Proton acceptor is the Glu187.

This sequence belongs to the PanB family. Homodecamer; pentamer of dimers. The cofactor is Mg(2+).

The protein localises to the cytoplasm. The enzyme catalyses 3-methyl-2-oxobutanoate + (6R)-5,10-methylene-5,6,7,8-tetrahydrofolate + H2O = 2-dehydropantoate + (6S)-5,6,7,8-tetrahydrofolate. Its pathway is cofactor biosynthesis; (R)-pantothenate biosynthesis; (R)-pantoate from 3-methyl-2-oxobutanoate: step 1/2. In terms of biological role, catalyzes the reversible reaction in which hydroxymethyl group from 5,10-methylenetetrahydrofolate is transferred onto alpha-ketoisovalerate to form ketopantoate. This Xylella fastidiosa (strain 9a5c) protein is 3-methyl-2-oxobutanoate hydroxymethyltransferase.